The following is an 848-amino-acid chain: Neuroligin-3 (848 aa).

Residues 1 to 37 form the signal peptide; that stretch reads MWLRLGPPSLSLSPKPTVGRSLCLTLWFLSLALRAST. The Extracellular segment spans residues 38 to 709; sequence QAPAPTVNTH…NPRDYSTELS (672 aa). An N-linked (GlcNAc...) asparagine glycan is attached at asparagine 98. A disulfide bridge links cysteine 106 with cysteine 141. Positions 170 to 195 are disordered; the sequence is RKGGSGAKKQGEDLADNDGDEDEDIR. The segment covering 182–194 has biased composition (acidic residues); that stretch reads DLADNDGDEDEDI. 2 disulfide bridges follow: cysteine 340–cysteine 351 and cysteine 510–cysteine 544. N-linked (GlcNAc...) asparagine glycosylation occurs at asparagine 545. Composition is skewed to polar residues over residues 645-656 and 677-689; these read TKVPPPDTTHSS and AYSN…SWNG. The interval 645 to 694 is disordered; sequence TKVPPPDTTHSSHITRRPNGKTWSTKRPAISPAYSNENAQGSWNGDQDAG. The chain crosses the membrane as a helical span at residues 710-730; the sequence is VTIAVGASLLFLNVLAFAALY. Over 731 to 848 the chain is Cytoplasmic; that stretch reads YRKDKRRQEP…LPHSHSTTRV (118 aa). Position 745 is a phosphoserine (serine 745). At tyrosine 792 the chain carries Phosphotyrosine.

The protein belongs to the type-B carboxylesterase/lipase family. As to quaternary structure, homodimer, and heterodimer with NLGN1 and NLGN2. Interacts with neurexins NRXN1, NRXN2 and NRXN3. Interaction with neurexins is mediated by heparan sulfate glycan modification on neurexin. Interacts (via its C-terminus) with DLG4/PSD-95 (via PDZ domain 3). As to expression, expressed in the blood vessel walls (at protein level). Detected in throughout the brain and in spinal cord. Detected in brain, and at lower levels in pancreas islet beta cells.

The protein localises to the cell membrane. The protein resides in the synapse. Functionally, cell surface protein involved in cell-cell-interactions via its interactions with neurexin family members. Plays a role in synapse function and synaptic signal transmission, and may mediate its effects by clustering other synaptic proteins. May promote the initial formation of synapses, but is not essential for this. May also play a role in glia-glia or glia-neuron interactions in the developing peripheral nervous system. This Homo sapiens (Human) protein is Neuroligin-3 (NLGN3).